Reading from the N-terminus, the 196-residue chain is Peroxisome assembly protein 22 (196 aa).

The chain crosses the membrane as a helical span at residues 15-37 (LWIAALVAASIVTISYKVYSSYI).

This sequence belongs to the peroxin-22 family.

The protein resides in the peroxisome membrane. Its function is as follows. Involved in peroxisome biogenesis. The sequence is that of Peroxisome assembly protein 22 (PEX22) from Debaryomyces hansenii (strain ATCC 36239 / CBS 767 / BCRC 21394 / JCM 1990 / NBRC 0083 / IGC 2968) (Yeast).